Consider the following 617-residue polypeptide: Phenylalanine--tRNA ligase beta subunit (617 aa).

Positions 306 to 383 (IQEKQINAQV…IGYGYDNLKK (78 aa)) constitute a B5 domain. Mg(2+)-binding residues include Asp361, Asp367, Glu370, and Asp371.

The protein belongs to the phenylalanyl-tRNA synthetase beta subunit family. Type 2 subfamily. In terms of assembly, tetramer of two alpha and two beta subunits. Requires Mg(2+) as cofactor.

Its subcellular location is the cytoplasm. The catalysed reaction is tRNA(Phe) + L-phenylalanine + ATP = L-phenylalanyl-tRNA(Phe) + AMP + diphosphate + H(+). The protein is Phenylalanine--tRNA ligase beta subunit (phesB) of Dictyostelium discoideum (Social amoeba).